Reading from the N-terminus, the 884-residue chain is Probable LRR receptor-like serine/threonine-protein kinase PAM74 (884 aa).

The signal sequence occupies residues 1 to 23 (MDSPCWLLLLLLGAFAIIGCVQA). Residues 24-510 (QDQQEFISLD…TEKNSKKKFP (487 aa)) are Extracellular-facing. N-linked (GlcNAc...) asparagine glycosylation is found at Asn143, Asn182, Asn200, Asn256, Asn289, Asn400, Asn403, Asn417, Asn433, Asn444, Asn465, and Asn470. 3 LRR repeats span residues 412–433 (RVLSLNLSSSGLTGIIAAAIQN), 436–457 (HLEKLDLSNNTLTGVVPEFLAQ), and 460–480 (SLVIINLSGNNLSGPLPQGLR). Residues 511 to 531 (VVIVASVASVAIIVAVLVIIF) traverse the membrane as a helical segment. The Cytoplasmic segment spans residues 532–884 (VLSKKKSSTV…FDTELFPRAR (353 aa)). Thr570 carries the phosphothreonine modification. The region spanning 579–852 (NNFQRVVGEG…QVANELKECL (274 aa)) is the Protein kinase domain. Residues 585–593 (VGEGGFGVV) and Lys607 each bind ATP. Tyr652 is subject to Phosphotyrosine. Asp704 acts as the Proton acceptor in catalysis. Ser738 carries the post-translational modification Phosphoserine. A phosphothreonine mark is found at Thr739 and Thr744. Tyr752 is modified (phosphotyrosine).

Belongs to the protein kinase superfamily. Ser/Thr protein kinase family. In terms of assembly, binds to the ammonium transporter AMT1-1.

It localises to the membrane. It catalyses the reaction L-seryl-[protein] + ATP = O-phospho-L-seryl-[protein] + ADP + H(+). The enzyme catalyses L-threonyl-[protein] + ATP = O-phospho-L-threonyl-[protein] + ADP + H(+). Functionally, required for accurate photosynthesis. The polypeptide is Probable LRR receptor-like serine/threonine-protein kinase PAM74 (PAM74) (Arabidopsis thaliana (Mouse-ear cress)).